A 195-amino-acid polypeptide reads, in one-letter code: uncharacterized protein (195 aa).

The N-terminal stretch at 1 to 17 (MKASLITAFVLPLLALA) is a signal peptide. N-linked (GlcNAc...) asparagine glycosylation is present at Asn75.

Its subcellular location is the secreted. This is an uncharacterized protein from Arthroderma benhamiae (strain ATCC MYA-4681 / CBS 112371) (Trichophyton mentagrophytes).